Here is a 92-residue protein sequence, read N- to C-terminus: uncharacterized protein (92 aa).

This is an uncharacterized protein from Dictyostelium discoideum (Social amoeba).